Here is a 599-residue protein sequence, read N- to C-terminus: MTTQVPPSALLPLNPEQLARLQAATTDLTPTQLAWVSGYFWGVLNQQPAALAATPAPAAEMPGITIISASQTGNARRVAEALRDDLLTAKLNVKLVNAGDYKFKQIASEKLLIVVTSTQGEGEPPEEAVALHKFLFSKKAPKLENTAFAVFSLGDSSYEFFCQSGKDFDSKLAELGGERLLDRVDADVEYQAAASEWRARVVDALKSRAPVAAPSQSVATGVVNEIHTSPYSKDAPLVASLSVNQKITGRNSEKDVRHIEIDLGDSGLRYQPGDALGVWYQNDPALVKELVELLWLKGDEPVTVEGKTLPLNEALQWHFELTVNTANIVENYATLTRSETLLPLVGDKAKLQHYAATTPIVDMVRFSPAQLDAEALINLLRPLTPRLYSIASSQEEVENEVHVTVGVVRYDVEGRARAGGASSFLADRVEEEGEVRVFIEHNDNFRLPANPETPVIMIGPGTGIAPFRAFMQQRAADEAPGKNWLFFGNPHFTEDFLYQVEWQRYVKEGVLTRIDLAWSRDQKEKVYVQDKLREQGAELWRWINDGAHIYVCGDANRMAKDVEQALLEVIAEFGGMDTEAADEFLSELRVERRYQRDVY.

A Flavodoxin-like domain is found at 64–202 (ITIISASQTG…AASEWRARVV (139 aa)). FMN-binding positions include 70–75 (SQTGNA), 117–120 (STQG), and 153–162 (LGDSSYEFFC). The FAD-binding FR-type domain occupies 234-448 (DAPLVASLSV…IEHNDNFRLP (215 aa)). FAD contacts are provided by residues threonine 322, alanine 356, 386-389 (RLYS), 404-406 (TVG), tyrosine 410, and 419-422 (GGAS). NADP(+)-binding positions include 519–520 (SR), 525–529 (KVYVQ), and aspartate 561. Residue tyrosine 599 participates in FAD binding.

Belongs to the NADPH-dependent sulphite reductase flavoprotein subunit CysJ family. The protein in the N-terminal section; belongs to the flavodoxin family. This sequence in the C-terminal section; belongs to the flavoprotein pyridine nucleotide cytochrome reductase family. Alpha(8)-beta(8). The alpha component is a flavoprotein, the beta component is a hemoprotein. FAD serves as cofactor. The cofactor is FMN.

The enzyme catalyses hydrogen sulfide + 3 NADP(+) + 3 H2O = sulfite + 3 NADPH + 4 H(+). It functions in the pathway sulfur metabolism; hydrogen sulfide biosynthesis; hydrogen sulfide from sulfite (NADPH route): step 1/1. Its function is as follows. Component of the sulfite reductase complex that catalyzes the 6-electron reduction of sulfite to sulfide. This is one of several activities required for the biosynthesis of L-cysteine from sulfate. The flavoprotein component catalyzes the electron flow from NADPH -&gt; FAD -&gt; FMN to the hemoprotein component. This Escherichia coli O157:H7 protein is Sulfite reductase [NADPH] flavoprotein alpha-component.